The primary structure comprises 149 residues: Large ribosomal subunit protein uL15 (149 aa).

Positions 1–64 (MVELHDLQPH…GQTPLYMRIP (64 aa)) are disordered. Positions 31–40 (TAGRGHKGQK) are enriched in basic residues.

Belongs to the universal ribosomal protein uL15 family. Part of the 50S ribosomal subunit.

Binds to the 23S rRNA. In Aquifex aeolicus (strain VF5), this protein is Large ribosomal subunit protein uL15.